The sequence spans 376 residues: Chaperone protein DnaJ (376 aa).

One can recognise a J domain in the interval 5–70 (DYYEILGVSK…QKRAAYDQYG (66 aa)). A CR-type zinc finger spans residues 131-209 (GVTKEIRIPT…CHGHGRVERS (79 aa)). Residues Cys144, Cys147, Cys161, Cys164, Cys183, Cys186, Cys197, and Cys200 each contribute to the Zn(2+) site. CXXCXGXG motif repeat units follow at residues 144 to 151 (CDVCHGSG), 161 to 168 (CPTCHGSG), 183 to 190 (CPHCQGRG), and 197 to 204 (CNKCHGHG).

Belongs to the DnaJ family. As to quaternary structure, homodimer. Requires Zn(2+) as cofactor.

It localises to the cytoplasm. Functionally, participates actively in the response to hyperosmotic and heat shock by preventing the aggregation of stress-denatured proteins and by disaggregating proteins, also in an autonomous, DnaK-independent fashion. Unfolded proteins bind initially to DnaJ; upon interaction with the DnaJ-bound protein, DnaK hydrolyzes its bound ATP, resulting in the formation of a stable complex. GrpE releases ADP from DnaK; ATP binding to DnaK triggers the release of the substrate protein, thus completing the reaction cycle. Several rounds of ATP-dependent interactions between DnaJ, DnaK and GrpE are required for fully efficient folding. Also involved, together with DnaK and GrpE, in the DNA replication of plasmids through activation of initiation proteins. This Escherichia coli O157:H7 (strain EC4115 / EHEC) protein is Chaperone protein DnaJ.